We begin with the raw amino-acid sequence, 458 residues long: Alpha-2C adrenergic receptor (458 aa).

The Extracellular segment spans residues Met1–Val51. Residues Asn19 and Asn33 are each glycosylated (N-linked (GlcNAc...) asparagine). A helical membrane pass occupies residues Ala52–Val76. Over Leu77–Leu88 the chain is Cytoplasmic. A helical transmembrane segment spans residues Phe89–Met114. Over Ala115–Cys124 the chain is Extracellular. Cys124 and Cys202 are oxidised to a cystine. Residues Gly125 to Leu147 traverse the membrane as a helical segment. The Cytoplasmic segment spans residues Asp148–Val168. Residues Lys169–Tyr191 form a helical membrane-spanning segment. The Extracellular segment spans residues Arg192 to Glu207. The chain crosses the membrane as a helical span at residues Thr208–Ala231. At Arg232–Val379 the chain is on the cytoplasmic side. The segment at Ser245–Arg343 is disordered. The span at Arg291–Arg303 shows a compositional bias: basic residues. A helical transmembrane segment spans residues Leu380–Ile403. The Extracellular segment spans residues Cys404–Lys416. A helical transmembrane segment spans residues Phe417 to Asn437. Residues Gln438–Gln458 are Cytoplasmic-facing.

This sequence belongs to the G-protein coupled receptor 1 family. Adrenergic receptor subfamily. ADRA2C sub-subfamily.

Its subcellular location is the cell membrane. In terms of biological role, alpha-2 adrenergic receptors mediate the catecholamine-induced inhibition of adenylate cyclase through the action of G proteins. This chain is Alpha-2C adrenergic receptor (Adra2c), found in Rattus norvegicus (Rat).